Here is a 489-residue protein sequence, read N- to C-terminus: Acetyl-coenzyme A carboxylase carboxyl transferase subunit beta, chloroplastic (489 aa).

One can recognise a CoA carboxyltransferase N-terminal domain in the interval 225–489; the sequence is LWIQCDNCYG…FFPLNKTEIK (265 aa). Residues cysteine 229, cysteine 232, cysteine 245, and cysteine 248 each contribute to the Zn(2+) site. A C4-type zinc finger spans residues 229 to 248; the sequence is CDNCYGLMYKKVEMNVCEEC.

Belongs to the AccD/PCCB family. Acetyl-CoA carboxylase is a heterohexamer composed of biotin carboxyl carrier protein, biotin carboxylase and 2 subunits each of ACCase subunit alpha and ACCase plastid-coded subunit beta (accD). Zn(2+) is required as a cofactor.

It is found in the plastid. Its subcellular location is the chloroplast stroma. The enzyme catalyses N(6)-carboxybiotinyl-L-lysyl-[protein] + acetyl-CoA = N(6)-biotinyl-L-lysyl-[protein] + malonyl-CoA. It participates in lipid metabolism; malonyl-CoA biosynthesis; malonyl-CoA from acetyl-CoA: step 1/1. Functionally, component of the acetyl coenzyme A carboxylase (ACC) complex. Biotin carboxylase (BC) catalyzes the carboxylation of biotin on its carrier protein (BCCP) and then the CO(2) group is transferred by the transcarboxylase to acetyl-CoA to form malonyl-CoA. The protein is Acetyl-coenzyme A carboxylase carboxyl transferase subunit beta, chloroplastic of Draba nemorosa (Woodland whitlowgrass).